The following is a 270-amino-acid chain: uncharacterized protein (270 aa).

The N-terminal stretch at 1 to 22 (MGYIKRMALYMSVFLLIIFIVG) is a signal peptide. Cysteine 23 carries the N-palmitoyl cysteine lipid modification. A lipid anchor (S-diacylglycerol cysteine) is attached at cysteine 23.

This sequence belongs to the staphylococcal tandem lipoprotein family.

The protein localises to the cell membrane. This is an uncharacterized protein from Staphylococcus aureus (strain COL).